A 685-amino-acid polypeptide reads, in one-letter code: Probable serine/threonine-protein kinase CPE1738 (685 aa).

The Protein kinase domain occupies 10–275 (YELLQCVGEG…LEKIKKDPNV (266 aa)). ATP is bound by residues 16–24 (VGEGGMSFV) and lysine 39. The active-site Proton acceptor is glutamate 143. The disordered stretch occupies residues 277–339 (ISSKSAEDED…NIQTKPQKAI (63 aa)). The span at 306–329 (EPDEDDEDDDEYYEDDEDEDEEEN) shows a compositional bias: acidic residues. 4 consecutive PASTA domains span residues 376 to 440 (GKDV…TVSG), 441 to 508 (GEGQ…TISK), 513 to 581 (KSET…TINY), and 589 to 648 (EKPK…TMEE). Residues 480 to 500 (VPRGEVISQSPNANESVDKGS) form a disordered region. A disordered region spans residues 623–685 (DTAKVKSVSN…PKQPEQSGNN (63 aa)). Low complexity-rich tracts occupy residues 627–645 (VKSVSNSGEVEEGGSVSVT) and 654–685 (QPTQPNQPTQPTQPNQQAQPEQPKQPEQSGNN).

Belongs to the protein kinase superfamily. Ser/Thr protein kinase family.

The enzyme catalyses L-seryl-[protein] + ATP = O-phospho-L-seryl-[protein] + ADP + H(+). It carries out the reaction L-threonyl-[protein] + ATP = O-phospho-L-threonyl-[protein] + ADP + H(+). This chain is Probable serine/threonine-protein kinase CPE1738, found in Clostridium perfringens (strain 13 / Type A).